We begin with the raw amino-acid sequence, 556 residues long: Formate--tetrahydrofolate ligase (556 aa).

65–72 (TPAGEGKT) is an ATP binding site.

This sequence belongs to the formate--tetrahydrofolate ligase family.

It carries out the reaction (6S)-5,6,7,8-tetrahydrofolate + formate + ATP = (6R)-10-formyltetrahydrofolate + ADP + phosphate. It participates in one-carbon metabolism; tetrahydrofolate interconversion. The protein is Formate--tetrahydrofolate ligase of Lachnoclostridium phytofermentans (strain ATCC 700394 / DSM 18823 / ISDg) (Clostridium phytofermentans).